The following is a 1293-amino-acid chain: Galactose/N-acetyl-D-galactosamine lectin heavy subunit 1 (1293 aa).

The N-terminal stretch at 1 to 15 is a signal peptide; it reads MKLLLLNILLLCCLA. Topologically, residues 16 to 1234 are extracellular; that stretch reads DKLNEFSADI…NNVGAIAAAT (1219 aa). N-linked (GlcNAc...) asparagine glycosylation is found at asparagine 95, asparagine 198, asparagine 234, asparagine 261, asparagine 337, asparagine 377, asparagine 390, asparagine 468, asparagine 487, asparagine 643, asparagine 659, asparagine 890, asparagine 992, asparagine 1138, asparagine 1204, and asparagine 1214. A helical transmembrane segment spans residues 1235 to 1255; the sequence is TVAVVVVAVVVALIVVSIGLF. The Cytoplasmic segment spans residues 1256 to 1293; that stretch reads KTYQLVSSAMKNAITITNENAEYVGADNEATNAATFNG.

In terms of assembly, heterodimer composed of a 170 kDa heavy subunit (hgl) and a 31/35 kDa light subunit (lgl); disulfide-linked. In terms of processing, N-glycosylated.

Its subcellular location is the cell membrane. In terms of biological role, lectin which binds galactose and N-acetyl-D-galactosamine of host glycoproteins and thus mediates adhesion to host cells. Mediates adherence to host colonic mucins, an essential step for pathogenic tissue invasion. This is Galactose/N-acetyl-D-galactosamine lectin heavy subunit 1 from Entamoeba histolytica (strain ATCC 30459 / HM-1:IMSS / ABRM).